Reading from the N-terminus, the 374-residue chain is P2Y purinoceptor 2 (374 aa).

Over methionine 1–lysine 32 the chain is Extracellular. 2 N-linked (GlcNAc...) asparagine glycosylation sites follow: asparagine 9 and asparagine 13. Residues tyrosine 33–leucine 59 form a helical membrane-spanning segment. Residues cysteine 60–threonine 70 are Cytoplasmic-facing. Residues tyrosine 71–tyrosine 93 traverse the membrane as a helical segment. The Extracellular segment spans residues alanine 94–arginine 110. A disulfide bridge connects residues cysteine 106 and cysteine 183. A helical membrane pass occupies residues phenylalanine 111–valine 129. At histidine 130–arginine 152 the chain is on the cytoplasmic side. A helical transmembrane segment spans residues valine 153 to valine 172. At threonine 173–histidine 194 the chain is on the extracellular side. A helical transmembrane segment spans residues phenylalanine 195–leucine 220. The Cytoplasmic portion of the chain corresponds to methionine 221–threonine 245. Residues isoleucine 246–tyrosine 268 traverse the membrane as a helical segment. Topologically, residues serine 269–alanine 286 are extracellular. Residues tyrosine 287 to alanine 308 form a helical membrane-spanning segment. At glycine 309–leucine 374 the chain is on the cytoplasmic side. The tract at residues aspartate 318–leucine 374 is disordered. Residues alanine 331–proline 340 are compositionally biased toward basic residues. Residues asparagine 341–glutamate 361 are compositionally biased toward basic and acidic residues.

Belongs to the G-protein coupled receptor 1 family.

It is found in the cell membrane. Receptor for ATP and UTP coupled to G-proteins that activate a phosphatidylinositol-calcium second messenger system. The affinity range is UTP = ATP &gt; ATP-gamma-S &gt;&gt; 2-methylthio-ATP = ADP. This Rattus norvegicus (Rat) protein is P2Y purinoceptor 2 (P2ry2).